A 774-amino-acid polypeptide reads, in one-letter code: Lon protease 1 (774 aa).

Residues 9–202 (IPLLPLRGLL…KVIDFINNEK (194 aa)) enclose the Lon N-terminal domain. ATP is bound at residue 354 to 361 (GPPGVGKT). Residues 590–771 (EDQVGVVTGL…DEVLEHALVG (182 aa)) enclose the Lon proteolytic domain. Active-site residues include Ser677 and Lys720.

This sequence belongs to the peptidase S16 family. Homohexamer. Organized in a ring with a central cavity. Exists as a mixture of small oligomeric species in solution.

The protein resides in the cytoplasm. It catalyses the reaction Hydrolysis of proteins in presence of ATP.. In terms of biological role, ATP-dependent serine protease that mediates the selective degradation of mutant and abnormal proteins as well as certain short-lived regulatory proteins. Required for cellular homeostasis and for survival from DNA damage and developmental changes induced by stress. Degrades polypeptides processively to yield small peptide fragments that are 5 to 10 amino acids long. Binds to DNA in a double-stranded, site-specific manner. Has been implicated in preventing sigma(G) activity under non-sporulation conditions. This chain is Lon protease 1, found in Bacillus subtilis (strain 168).